The following is a 396-amino-acid chain: L-lactate dehydrogenase (396 aa).

The region spanning 1 to 380 is the FMN hydroxy acid dehydrogenase domain; it reads MIISAASDYR…SGDSLVQELG (380 aa). A substrate-binding site is contributed by Tyr-24. FMN contacts are provided by Ser-106 and Gln-127. Position 129 (Tyr-129) interacts with substrate. Position 155 (Thr-155) interacts with FMN. Arg-164 provides a ligand contact to substrate. Lys-251 contributes to the FMN binding site. The active-site Proton acceptor is His-275. Arg-278 is a binding site for substrate. 306-330 serves as a coordination point for FMN; the sequence is DSGIRNGLDVVRMIALGADTVLLGR.

It belongs to the FMN-dependent alpha-hydroxy acid dehydrogenase family. It depends on FMN as a cofactor.

Its subcellular location is the cell inner membrane. The enzyme catalyses (S)-lactate + A = pyruvate + AH2. Catalyzes the conversion of L-lactate to pyruvate. Is coupled to the respiratory chain. In Salmonella choleraesuis (strain SC-B67), this protein is L-lactate dehydrogenase.